Here is a 276-residue protein sequence, read N- to C-terminus: Diaminopimelate epimerase (276 aa).

Asn-13, Gln-46, and Asn-66 together coordinate substrate. Cys-75 serves as the catalytic Proton donor. Residues Gly-76–Asn-77, Asn-159, Asn-192, and Glu-210–Arg-211 contribute to the substrate site. The active-site Proton acceptor is Cys-219. Gly-220–Ser-221 contributes to the substrate binding site.

It belongs to the diaminopimelate epimerase family. In terms of assembly, homodimer.

It is found in the cytoplasm. It carries out the reaction (2S,6S)-2,6-diaminopimelate = meso-2,6-diaminopimelate. The protein operates within amino-acid biosynthesis; L-lysine biosynthesis via DAP pathway; DL-2,6-diaminopimelate from LL-2,6-diaminopimelate: step 1/1. Its function is as follows. Catalyzes the stereoinversion of LL-2,6-diaminopimelate (L,L-DAP) to meso-diaminopimelate (meso-DAP), a precursor of L-lysine and an essential component of the bacterial peptidoglycan. This is Diaminopimelate epimerase from Aliivibrio fischeri (strain ATCC 700601 / ES114) (Vibrio fischeri).